The sequence spans 303 residues: Ribosomal protein uL3 glutamine methyltransferase (303 aa).

It belongs to the protein N5-glutamine methyltransferase family. PrmB subfamily.

The enzyme catalyses L-glutaminyl-[ribosomal protein uL3] + S-adenosyl-L-methionine = N(5)-methyl-L-glutaminyl-[ribosomal protein uL3] + S-adenosyl-L-homocysteine + H(+). Methylates large ribosomal subunit protein uL3 on a specific glutamine residue. The sequence is that of Ribosomal protein uL3 glutamine methyltransferase from Neisseria meningitidis serogroup B (strain ATCC BAA-335 / MC58).